A 273-amino-acid polypeptide reads, in one-letter code: Petrobactin import ATP-binding protein FpuD (273 aa).

Residues 5–241 (LETKRLTLSY…KLVRDVFRME (237 aa)) form the ABC transporter domain. 37–44 (GSNGCGKS) serves as a coordination point for ATP.

The protein belongs to the ABC transporter superfamily. The complex is composed of two ATP-binding proteins (FpuD), two transmembrane proteins (FpuB) and a solute-binding protein (FpuA).

The protein resides in the cell membrane. The enzyme catalyses a Fe(III)-siderophore(out) + ATP + H2O = a Fe(III)-siderophore(in) + ADP + phosphate + H(+). Part of an ABC transporter complex involved in ferric-petrobactin uptake. Probably responsible for energy coupling to the transport system. The protein is Petrobactin import ATP-binding protein FpuD of Bacillus anthracis.